Reading from the N-terminus, the 1286-residue chain is DNA-directed RNA polymerase subunit beta' (1286 aa).

Positions 58, 60, 73, and 76 each coordinate Zn(2+). The Mg(2+) site is built by aspartate 533, aspartate 535, and aspartate 537. Residues cysteine 867, cysteine 944, cysteine 951, and cysteine 954 each coordinate Zn(2+).

The protein belongs to the RNA polymerase beta' chain family. As to quaternary structure, the RNAP catalytic core consists of 2 alpha, 1 beta, 1 beta' and 1 omega subunit. When a sigma factor is associated with the core the holoenzyme is formed, which can initiate transcription. Mg(2+) serves as cofactor. The cofactor is Zn(2+).

The enzyme catalyses RNA(n) + a ribonucleoside 5'-triphosphate = RNA(n+1) + diphosphate. Its function is as follows. DNA-dependent RNA polymerase catalyzes the transcription of DNA into RNA using the four ribonucleoside triphosphates as substrates. In Tropheryma whipplei (strain TW08/27) (Whipple's bacillus), this protein is DNA-directed RNA polymerase subunit beta'.